Reading from the N-terminus, the 166-residue chain is Regulatory protein RecX (166 aa).

It belongs to the RecX family.

Its subcellular location is the cytoplasm. Its function is as follows. Modulates RecA activity. The polypeptide is Regulatory protein RecX (Shigella boydii serotype 4 (strain Sb227)).